The sequence spans 389 residues: Ribosomal RNA large subunit methyltransferase M (389 aa).

The segment covering 1–13 has biased composition (polar residues); it reads MIGNARMSQKYPT. Positions 1–24 are disordered; it reads MIGNARMSQKYPTSSSRKRSPLSS. S-adenosyl-L-methionine is bound by residues serine 214, 247–250, aspartate 266, aspartate 286, and aspartate 302; that span reads APGG. Catalysis depends on lysine 331, which acts as the Proton acceptor.

This sequence belongs to the class I-like SAM-binding methyltransferase superfamily. RNA methyltransferase RlmE family. RlmM subfamily. In terms of assembly, monomer.

Its subcellular location is the cytoplasm. The catalysed reaction is cytidine(2498) in 23S rRNA + S-adenosyl-L-methionine = 2'-O-methylcytidine(2498) in 23S rRNA + S-adenosyl-L-homocysteine + H(+). Catalyzes the 2'-O-methylation at nucleotide C2498 in 23S rRNA. The sequence is that of Ribosomal RNA large subunit methyltransferase M from Hahella chejuensis (strain KCTC 2396).